Here is a 91-residue protein sequence, read N- to C-terminus: Small ribosomal subunit protein bS16 (91 aa).

It belongs to the bacterial ribosomal protein bS16 family.

The sequence is that of Small ribosomal subunit protein bS16 from Exiguobacterium sibiricum (strain DSM 17290 / CCUG 55495 / CIP 109462 / JCM 13490 / 255-15).